The chain runs to 30 residues: Dermaseptin-S3 (30 aa).

This sequence belongs to the frog skin active peptide (FSAP) family. Dermaseptin subfamily. Monomer and oligomer. Forms aggregates in aqueous environments. Expressed by the skin glands.

The protein resides in the secreted. Functionally, potent antimicrobial peptide with activity against bacteria and protozoa. Also has activity against fungi. Probably acts by disturbing membrane functions with its amphipathic structure. Binds to healthy erythrocytes (this binding is receptor independent), but has very weak hemolytic activity. Does not bind to P.falciparum infected erythrocytes, but accumulates within the parasite. Kills the parasite, but has no hemolytic activity on the host cell. In Phyllomedusa sauvagei (Sauvage's leaf frog), this protein is Dermaseptin-S3.